Here is a 439-residue protein sequence, read N- to C-terminus: MKTQIELARDGIISRQMEQVAADENFNPEIIRTRVAAGEIVIPCNPNRTNQKVVGIGTGLRTKINASIGTSSDICSIENEVQKAIAIEEEGADTLMELSAGGNLDKVRQEVLKAVNLPVGNVPLYQAFKETGRKYNDPSKLDPEFLFDLIERQLSDGLSFMAIHCGINQYTIERLRKQGFRYGGLASKGGTFMVAWMDATGKENPLYEQFDRVCTLMKKYDAVLSLGNGIRAGAIHDSHDRAQMAEMIINCELAELGREQGCQMMVEGPGHVPLDEIQANIILEKRMSGNAPYYVLGPIPADTGAGYDHITSAIGAASSTWHGADLICYITPAEHLALPTEADVREGVRATKLAVRIGDIAKYPDRRENERLASMARRDMRWDDLEQHLLFPDIARKTRASRAPEDGGTCTMCGDFCAMKKGNEIFKDDIKNDKIAPGA.

Substrate contacts are provided by residues methionine 96, tyrosine 125, histidine 164, 187–189, 228–231, and glutamate 267; these read SKG and NGIR. Histidine 271 contacts Zn(2+). Position 294 (tyrosine 294) interacts with substrate. Histidine 335 provides a ligand contact to Zn(2+). 3 residues coordinate [4Fe-4S] cluster: cysteine 410, cysteine 413, and cysteine 417.

It belongs to the ThiC family. 5-hydroxybenzimidazole synthase subfamily. As to quaternary structure, homodimer. Requires [4Fe-4S] cluster as cofactor.

It catalyses the reaction 5-amino-1-(5-phospho-beta-D-ribosyl)imidazole + AH2 + S-adenosyl-L-methionine = 5-hydroxybenzimidazole + 5'-deoxyadenosine + formate + L-methionine + A + NH4(+) + phosphate + 2 H(+). Functionally, catalyzes the conversion of aminoimidazole ribotide (AIR) to 5-hydroxybenzimidazole (5-HBI) in a radical S-adenosyl-L-methionine (SAM)-dependent reaction. Is thus involved in the anaerobic biosynthesis of the benzimidazole lower axial ligand of the cobamide produced by D.autotrophicum. In Desulforapulum autotrophicum (strain ATCC 43914 / DSM 3382 / VKM B-1955 / HRM2) (Desulfobacterium autotrophicum), this protein is 5-hydroxybenzimidazole synthase.